The primary structure comprises 284 residues: Ribosomal RNA small subunit methyltransferase A (284 aa).

S-adenosyl-L-methionine is bound by residues Asn-28, Leu-30, Gly-55, Glu-77, Asp-103, and Asn-123.

This sequence belongs to the class I-like SAM-binding methyltransferase superfamily. rRNA adenine N(6)-methyltransferase family. RsmA subfamily.

It localises to the cytoplasm. The enzyme catalyses adenosine(1518)/adenosine(1519) in 16S rRNA + 4 S-adenosyl-L-methionine = N(6)-dimethyladenosine(1518)/N(6)-dimethyladenosine(1519) in 16S rRNA + 4 S-adenosyl-L-homocysteine + 4 H(+). In terms of biological role, specifically dimethylates two adjacent adenosines (A1518 and A1519) in the loop of a conserved hairpin near the 3'-end of 16S rRNA in the 30S particle. May play a critical role in biogenesis of 30S subunits. The polypeptide is Ribosomal RNA small subunit methyltransferase A (Bradyrhizobium diazoefficiens (strain JCM 10833 / BCRC 13528 / IAM 13628 / NBRC 14792 / USDA 110)).